Consider the following 218-residue polypeptide: uncharacterized protein (218 aa).

2 helical membrane passes run 14–34 (CLLS…YFTS) and 175–195 (LIIP…LALV).

This sequence to H.pylori HP0270.

It localises to the cell membrane. This is an uncharacterized protein from Rickettsia prowazekii (strain Madrid E).